We begin with the raw amino-acid sequence, 182 residues long: ATP-dependent protease subunit HslV (182 aa).

Thr6 is an active-site residue. Na(+) is bound by residues Ala164, Cys167, and Thr170.

This sequence belongs to the peptidase T1B family. HslV subfamily. A double ring-shaped homohexamer of HslV is capped on each side by a ring-shaped HslU homohexamer. The assembly of the HslU/HslV complex is dependent on binding of ATP.

It is found in the cytoplasm. It carries out the reaction ATP-dependent cleavage of peptide bonds with broad specificity.. Its activity is regulated as follows. Allosterically activated by HslU binding. Functionally, protease subunit of a proteasome-like degradation complex believed to be a general protein degrading machinery. The polypeptide is ATP-dependent protease subunit HslV (Borreliella afzelii (strain PKo) (Borrelia afzelii)).